We begin with the raw amino-acid sequence, 335 residues long: Malate dehydrogenase (335 aa).

Residue 11–17 participates in NAD(+) binding; it reads GAAGQIG. 2 residues coordinate substrate: Arg94 and Arg100. NAD(+) contacts are provided by residues Asn107, Gln114, and 131-133; that span reads VGN. Residues Asn133 and Arg167 each coordinate substrate. His192 functions as the Proton acceptor in the catalytic mechanism.

This sequence belongs to the LDH/MDH superfamily. MDH type 2 family.

The enzyme catalyses (S)-malate + NAD(+) = oxaloacetate + NADH + H(+). Catalyzes the reversible oxidation of malate to oxaloacetate. The chain is Malate dehydrogenase from Bdellovibrio bacteriovorus (strain ATCC 15356 / DSM 50701 / NCIMB 9529 / HD100).